Reading from the N-terminus, the 141-residue chain is Glutathione transferase FosA (141 aa).

One can recognise a VOC domain in the interval 4 to 117 (SLNHLTLAVS…DGHKLELHVG (114 aa)). Mn(2+)-binding residues include His7, His67, and Glu113.

The protein belongs to the fosfomycin resistance protein family. Homodimer. It depends on Mn(2+) as a cofactor.

The protein localises to the cytoplasm. The catalysed reaction is RX + glutathione = an S-substituted glutathione + a halide anion + H(+). Requires the monovalent cation K(+) for optimal activity. Metalloglutathione transferase which confers resistance to fosfomycin by catalyzing the addition of glutathione to fosfomycin. The protein is Glutathione transferase FosA (fosA) of Serratia marcescens.